The chain runs to 708 residues: Double-strand break repair protein MRE11 (708 aa).

Residue Ser-2 is modified to N-acetylserine. Ser-2 is subject to Phosphoserine. Mn(2+) contacts are provided by Asp-20, His-22, and Asp-60. Residues 87-117 form an interaction with NBN region; that stretch reads RPVQFEILSDQSVNFGFSKFPWVNYQDGNLN. Residue Asn-128 participates in Mn(2+) binding. Catalysis depends on His-129, which acts as the Proton donor. Mn(2+) contacts are provided by His-217, His-245, and His-247. A Glycyl lysine isopeptide (Lys-Gly) (interchain with G-Cter in SUMO2) cross-link involves residue Lys-255. Ser-275 carries the post-translational modification Phosphoserine. Residue Lys-282 forms a Glycyl lysine isopeptide (Lys-Gly) (interchain with G-Cter in UFM1) linkage. Residue Lys-339 forms a Glycyl lysine isopeptide (Lys-Gly) (interchain with G-Cter in ubiquitin) linkage. Lys-384 participates in a covalent cross-link: Glycyl lysine isopeptide (Lys-Gly) (interchain with G-Cter in SUMO). Lys-416 participates in a covalent cross-link: Glycyl lysine isopeptide (Lys-Gly) (interchain with G-Cter in SUMO2). Lys-467 is covalently cross-linked (Glycyl lysine isopeptide (Lys-Gly) (interchain with G-Cter in SUMO)). A Glycyl lysine isopeptide (Lys-Gly) (interchain with G-Cter in ubiquitin) cross-link involves residue Lys-480. 2 disordered regions span residues 507 to 540 and 556 to 614; these read TRQK…ASAF and NDSD…AVSA. The span at 569–579 shows a compositional bias: basic residues; sequence GRGRGRGRRGG. Asymmetric dimethylarginine is present on residues Arg-570, Arg-572, Arg-574, Arg-576, Arg-577, Arg-580, Arg-587, Arg-592, and Arg-594. The GAR signature appears at 570–594; that stretch reads RGRGRGRRGGRGQNSASRGGSQRGR. Residues 599–614 show a composition bias toward polar residues; sequence LETSTRSRNSKTAVSA. The residue at position 619 (Ser-619) is a Phosphoserine. Lys-625 participates in a covalent cross-link: Glycyl lysine isopeptide (Lys-Gly) (interchain with G-Cter in SUMO2). The residue at position 641 (Ser-641) is a Phosphoserine. Position 649 is a phosphoserine; by PLK1 (Ser-649). Positions 651–708 are disordered; the sequence is VEEDIFPTTSKTDQRWSSTSSSKIMSQSQVSKGVDFESSEDDDDDPFMNTSSLRRNRR. A compositionally biased stretch (low complexity) spans 667-681; the sequence is SSTSSSKIMSQSQVS. Lys-673 bears the N6-lactoyllysine mark. Phosphoserine; by ATM occurs at positions 676 and 678. Residues 687–696 are compositionally biased toward acidic residues; that stretch reads ESSEDDDDDP. A Phosphoserine; by CDK2 modification is found at Ser-688. 2 positions are modified to phosphoserine: Ser-689 and Ser-701. The span at 698 to 708 shows a compositional bias: polar residues; the sequence is MNTSSLRRNRR.

It belongs to the MRE11/RAD32 family. Component of the MRN complex composed of two heterodimers RAD50 and MRE11 associated with a single NBN. The MRN complexes dimerize on DNA to form joined MRN-MRN oligomers required for DNA double-strand break repair. As part of the MRN complex, interacts with MCM9; the interaction recruits the complex to DNA repair sites. Component of the BASC complex, at least composed of BRCA1, MSH2, MSH6, MLH1, ATM, BLM, RAD50, MRE11 and NBN. Found in a complex with TERF2. Interacts with DCLRE1C/Artemis and DCLRE1B/Apollo. Interacts with ATF2. Interacts with EXD2. Interacts with MRNIP. Interacts with SAMHD1; leading to stimulate 3'-5' exonuclease activity. Interacts (when ubiquitinated) with UBQLN4 (via its UBA domain). Interacts with CYREN (via XLF motif). Interacts with GFI1; promoting methylation by PRMT1. Interacts with DYNLL1; inhibiting the activity of MRE11. Interacts with C1QBP and RAD50; interaction takes place in absence of DNA damage to form the MRC (MRE11-RAD50-C1QBP) complex that inhibits the activity of MRE11. Interacts with AGER/RAGE. AGER is recruited to DNA double-strand break sites where it enhances MRE11 endonuclease activity to promote DNA repair. As to quaternary structure, (Microbial infection) Interacts with herpes simplex virus 1 protein UL12. Mn(2+) is required as a cofactor. Phosphorylated by ATM at Ser-676 and Ser-678 in response to DNA damage, promoting MRE11 activity: phosphorylation activates MRE11 by preventing the interaction between MRE11 and the C1QBP inhibitor. Phosphorylation at Ser-649 by PLK1 primes for phosphorylation at Ser-688 by CK2, inhibiting recruitment of the MRN complex to DNA damage sites. In terms of processing, asymmetric dimethylation by PRMT1 promotes MRE11 exonuclease activity. Post-translationally, lactylation at Lys-673 by CREBBP/CBP in response to DNA damage promotes DNA binding and MRE11 activity. Acetylated on lysine residues by KAT2A /GCN5. In terms of processing, ubiquitinated following DNA damage. Ubiquitination triggers interaction with UBQLN4, leading to MRE11 removal from chromatin and degradation by the proteasome. Ubiquitinated at Lys-339 and Lys-480 by RNF126 via 'Lys-27'- and 'Lys-29'-linked polyubiquitin chains, promoting the exonuclease activity of MRE11. Post-translationally, SUMOylated by PIAS1, stabilizing MRE11 on chromatin during end resection. DeSUMOylated by SENP3 following removal from DNA double-strand breaks (DSBs). Ufmylation at Lys-282 promotes MRE11 activity and is required for activation of the ATM and ATR kinases by the MRN complex. In terms of processing, (Microbial infection) Following infection by adenovirus E4, ubiquitinated and degraded by a SCF-like E3 ubiquitin ligase complex containing viral proteins E1B-55K and E4-ORF6.

Its subcellular location is the nucleus. The protein resides in the chromosome. The protein localises to the telomere. With respect to regulation, interaction with SAMHD1 stimulates the double-strand-specific 3'-5' exonuclease activity. RBBP8/CtIP specifically promotes the endonuclease activity to clear protein-DNA adducts and generate clean double-strand break ends. DYNLL1-binding inhibits the activity of MRE11. MRE11 activity is inhibited by C1QBP: in absence of DNA damage, C1QBP interacts with unphosphorylated MRE11, preventing formation and activity of the MRN complex. The mirin-derivative PFM39, specifically inhibits the 3'-5' exonuclease activity. The N-alkylated mirin-derivatives PFM03 and PFM01 specifically inhibit the endonuclease activity. Core component of the MRN complex, which plays a central role in double-strand break (DSB) repair, DNA recombination, maintenance of telomere integrity and meiosis. The MRN complex is involved in the repair of DNA double-strand breaks (DSBs) via homologous recombination (HR), an error-free mechanism which primarily occurs during S and G2 phases. The complex (1) mediates the end resection of damaged DNA, which generates proper single-stranded DNA, a key initial steps in HR, and is (2) required for the recruitment of other repair factors and efficient activation of ATM and ATR upon DNA damage. Within the MRN complex, MRE11 possesses both single-strand endonuclease activity and double-strand-specific 3'-5' exonuclease activity. After DSBs, MRE11 is loaded onto DSBs sites and cleaves DNA by cooperating with RBBP8/CtIP to initiate end resection. MRE11 first endonucleolytically cleaves the 5' strand at DNA DSB ends to prevent non-homologous end joining (NHEJ) and licence HR. It then generates a single-stranded DNA gap via 3' to 5' exonucleolytic degradation to create entry sites for EXO1- and DNA2-mediated 5' to 3' long-range resection, which is required for single-strand invasion and recombination. RBBP8/CtIP specifically promotes the endonuclease activity of MRE11 to clear protein-DNA adducts and generate clean double-strand break ends. MRE11 endonuclease activity is also enhanced by AGER/RAGE. The MRN complex is also required for DNA damage signaling via activation of the ATM and ATR kinases: the nuclease activity of MRE11 is not required to activate ATM and ATR. The MRN complex is also required for the processing of R-loops. The MRN complex is involved in the activation of the cGAS-STING pathway induced by DNA damage during tumorigenesis: the MRN complex acts by displacing CGAS from nucleosome sequestration, thereby activating it. In telomeres the MRN complex may modulate t-loop formation. Functionally, MRE11 contains two DNA-binding domains (DBDs), enabling it to bind both single-stranded DNA (ssDNA) and double-stranded DNA (dsDNA). This Homo sapiens (Human) protein is Double-strand break repair protein MRE11.